Here is a 159-residue protein sequence, read N- to C-terminus: Regulatory protein RecX (159 aa).

The protein belongs to the RecX family.

The protein resides in the cytoplasm. Modulates RecA activity. The sequence is that of Regulatory protein RecX from Acinetobacter baylyi (strain ATCC 33305 / BD413 / ADP1).